The sequence spans 309 residues: Ribose-phosphate pyrophosphokinase (309 aa).

ATP is bound by residues 37 to 39 and 96 to 97; these read DGE and RQ. The Mg(2+) site is built by H130 and D169. K192 is an active-site residue. D-ribose 5-phosphate is bound by residues R194, D218, and 222-226; that span reads DTAGT.

Belongs to the ribose-phosphate pyrophosphokinase family. Class I subfamily. As to quaternary structure, homohexamer. Mg(2+) serves as cofactor.

It is found in the cytoplasm. It catalyses the reaction D-ribose 5-phosphate + ATP = 5-phospho-alpha-D-ribose 1-diphosphate + AMP + H(+). It functions in the pathway metabolic intermediate biosynthesis; 5-phospho-alpha-D-ribose 1-diphosphate biosynthesis; 5-phospho-alpha-D-ribose 1-diphosphate from D-ribose 5-phosphate (route I): step 1/1. Its function is as follows. Involved in the biosynthesis of the central metabolite phospho-alpha-D-ribosyl-1-pyrophosphate (PRPP) via the transfer of pyrophosphoryl group from ATP to 1-hydroxyl of ribose-5-phosphate (Rib-5-P). This chain is Ribose-phosphate pyrophosphokinase, found in Wolinella succinogenes (strain ATCC 29543 / DSM 1740 / CCUG 13145 / JCM 31913 / LMG 7466 / NCTC 11488 / FDC 602W) (Vibrio succinogenes).